Reading from the N-terminus, the 237-residue chain is Phosphoribosylaminoimidazole-succinocarboxamide synthase (237 aa).

The protein belongs to the SAICAR synthetase family.

It catalyses the reaction 5-amino-1-(5-phospho-D-ribosyl)imidazole-4-carboxylate + L-aspartate + ATP = (2S)-2-[5-amino-1-(5-phospho-beta-D-ribosyl)imidazole-4-carboxamido]succinate + ADP + phosphate + 2 H(+). Its pathway is purine metabolism; IMP biosynthesis via de novo pathway; 5-amino-1-(5-phospho-D-ribosyl)imidazole-4-carboxamide from 5-amino-1-(5-phospho-D-ribosyl)imidazole-4-carboxylate: step 1/2. The chain is Phosphoribosylaminoimidazole-succinocarboxamide synthase from Listeria welshimeri serovar 6b (strain ATCC 35897 / DSM 20650 / CCUG 15529 / CIP 8149 / NCTC 11857 / SLCC 5334 / V8).